Consider the following 288-residue polypeptide: Polyamine aminopropyltransferase (288 aa).

A PABS domain is found at 9 to 238 (ETLHDQFGQY…GIMTFAWATD (230 aa)). S-methyl-5'-thioadenosine is bound at residue Q33. Spermidine contacts are provided by H64 and D88. S-methyl-5'-thioadenosine-binding positions include E108 and 140–141 (DG). D158 acts as the Proton acceptor in catalysis. 158–161 (DCTD) is a spermidine binding site. P165 contacts S-methyl-5'-thioadenosine.

It belongs to the spermidine/spermine synthase family. In terms of assembly, homodimer or homotetramer.

The protein localises to the cytoplasm. It catalyses the reaction S-adenosyl 3-(methylsulfanyl)propylamine + putrescine = S-methyl-5'-thioadenosine + spermidine + H(+). Its pathway is amine and polyamine biosynthesis; spermidine biosynthesis; spermidine from putrescine: step 1/1. In terms of biological role, catalyzes the irreversible transfer of a propylamine group from the amino donor S-adenosylmethioninamine (decarboxy-AdoMet) to putrescine (1,4-diaminobutane) to yield spermidine. The protein is Polyamine aminopropyltransferase of Shigella sonnei (strain Ss046).